Reading from the N-terminus, the 121-residue chain is Basic phospholipase A2 homolog zhaoermiatoxin (121 aa).

7 disulfides stabilise this stretch: C26–C115, C28–C44, C43–C95, C49–C121, C50–C88, C57–C81, and C75–C86.

It belongs to the phospholipase A2 family. Group II subfamily. R49 sub-subfamily. Homodimer. In terms of tissue distribution, expressed by the venom gland.

The protein resides in the secreted. Snake venom phospholipase A2 homolog that induces myonecrosis, and edema. Has low myotoxic activity. This chain is Basic phospholipase A2 homolog zhaoermiatoxin, found in Protobothrops mangshanensis (Mangshan pitviper).